The sequence spans 215 residues: MOB kinase activator-like 1A (215 aa).

Positions Met1–Leu29 are disordered. Positions 80, 85, 162, and 167 each coordinate Zn(2+).

It belongs to the MOB1/phocein family. Isoform 1 is constitutively expressed. Isoform 2 is specifically expressed in flowers bud during sporogenesis and gametogenesis.

It localises to the cytoplasm. It is found in the cytoskeleton. The protein resides in the phragmoplast. The sequence is that of MOB kinase activator-like 1A from Medicago sativa subsp. falcata (Sickle medic).